Reading from the N-terminus, the 236-residue chain is MTSRLFALIPCAGTGSRSGSALPKQYRTLAGRALLHYTLAAFDACSEFAQTLVVISPDDAHFDARRFAGLRFAVRRCGGASRQASVMNGLIQLAEFGATDADWVLVHDAARPGITPALIRTLIGALKDDPVGGIVALPVADTLKRVPAGGDAIERTESRNGLWQAQTPQMFRIGMLRDAIRRAQLDGHDLTDEASAIEWAGHTPRVVQGSLRNFKVTYPEDFDLAEAILAQPARAS.

This sequence belongs to the IspD/TarI cytidylyltransferase family. IspD subfamily.

The enzyme catalyses 2-C-methyl-D-erythritol 4-phosphate + CTP + H(+) = 4-CDP-2-C-methyl-D-erythritol + diphosphate. The protein operates within isoprenoid biosynthesis; isopentenyl diphosphate biosynthesis via DXP pathway; isopentenyl diphosphate from 1-deoxy-D-xylulose 5-phosphate: step 2/6. Catalyzes the formation of 4-diphosphocytidyl-2-C-methyl-D-erythritol from CTP and 2-C-methyl-D-erythritol 4-phosphate (MEP). This Burkholderia pseudomallei (strain 1106a) protein is 2-C-methyl-D-erythritol 4-phosphate cytidylyltransferase.